A 276-amino-acid polypeptide reads, in one-letter code: Monoglyceride lipase homolog (276 aa).

It belongs to the orthopoxvirus OPG043 family.

The polypeptide is Monoglyceride lipase homolog (OPG043) (Cynomys gunnisoni (Gunnison's prairie dog)).